An 876-amino-acid polypeptide reads, in one-letter code: MAP7 domain-containing protein 3 (876 aa).

3 disordered regions span residues 30–139 (AEER…KFKA), 162–200 (GGVM…VDNT), and 402–438 (TEAP…IDKR). The segment covering 39–54 (INSSAGANKRSSSTPD) has biased composition (polar residues). Residues 58-136 (LKNDVKQQLA…KQKQAEDTEK (79 aa)) adopt a coiled-coil conformation. Basic and acidic residues-rich tracts occupy residues 60-139 (NDVK…KFKA) and 169-196 (KSGK…DMQH). Phosphoserine is present on residues Ser-417 and Ser-483. 2 coiled-coil regions span residues 549 to 578 (IQIR…IARK) and 626 to 658 (SAMM…RRKA). 2 disordered regions span residues 558 to 683 (QSKN…EIFP) and 742 to 783 (IQGK…NPNH). 2 stretches are compositionally biased toward basic and acidic residues: residues 559-590 (SKNE…DKVP) and 630-659 (KSRD…RKAS). Residues 665–679 (SEDEADDEGESEDSL) are compositionally biased toward acidic residues. Residues 750 to 763 (SAKKPPTRPIRSRK) show a composition bias toward basic residues. Polar residues predominate over residues 771–782 (IRPTQSASSNPN).

This sequence belongs to the MAP7 family. In terms of tissue distribution, high expression in lung, skeletal muscle, brain, and kidney, with much weaker expression in spleen, small intestine, liver, and heart.

It localises to the cytoplasm. The protein resides in the cytoskeleton. It is found in the spindle. Functionally, promotes the assembly and stability of microtubules. In Mus musculus (Mouse), this protein is MAP7 domain-containing protein 3 (Map7d3).